Here is a 120-residue protein sequence, read N- to C-terminus: Ribonuclease P protein component (120 aa).

It belongs to the RnpA family. Consists of a catalytic RNA component (M1 or rnpB) and a protein subunit.

The enzyme catalyses Endonucleolytic cleavage of RNA, removing 5'-extranucleotides from tRNA precursor.. Functionally, RNaseP catalyzes the removal of the 5'-leader sequence from pre-tRNA to produce the mature 5'-terminus. It can also cleave other RNA substrates such as 4.5S RNA. The protein component plays an auxiliary but essential role in vivo by binding to the 5'-leader sequence and broadening the substrate specificity of the ribozyme. This is Ribonuclease P protein component from Chlamydia trachomatis serovar A (strain ATCC VR-571B / DSM 19440 / HAR-13).